Here is a 494-residue protein sequence, read N- to C-terminus: Probable terminase, large subunit (494 aa).

Alanine 26–threonine 33 serves as a coordination point for ATP. The Walker A motif motif lies at serine 56 to serine 63. A Walker B motif motif is present at residues leucine 158–glutamate 163. The For ATPase activity role is filled by glutamate 163. Mg(2+)-binding residues include aspartate 293, aspartate 356, and aspartate 446.

It belongs to the punalikevirus large terminase family. In terms of assembly, interacts with pacA protein. Requires Mg(2+) as cofactor.

Its function is as follows. Component of the molecular motor that translocates genomic DNA in empty capsid during DNA packaging. Heterooligomerize with small terminase protein to be docked on capsid portal protein. Forms a ring-like structure through which genomic DNA is translocated into the capsid. May have or induce an endonuclease activity to cleave the genome concatemer after encapsidation. The sequence is that of Probable terminase, large subunit (pacB) from Escherichia coli (Bacteriophage P7).